A 596-amino-acid chain; its full sequence is DNA mismatch repair protein MutL (596 aa).

Belongs to the DNA mismatch repair MutL/HexB family.

Its function is as follows. This protein is involved in the repair of mismatches in DNA. It is required for dam-dependent methyl-directed DNA mismatch repair. May act as a 'molecular matchmaker', a protein that promotes the formation of a stable complex between two or more DNA-binding proteins in an ATP-dependent manner without itself being part of a final effector complex. The sequence is that of DNA mismatch repair protein MutL from Leptospira borgpetersenii serovar Hardjo-bovis (strain L550).